We begin with the raw amino-acid sequence, 545 residues long: Cannabidiolic acid synthase-like 1 (545 aa).

An N-terminal signal peptide occupies residues 1-28 (MKCSTFCFWYVCKIIFFFLSFNIQISIA). A disulfide bridge links C37 with C99. Residues N45, N65, N89, and N168 are each glycosylated (N-linked (GlcNAc...) asparagine). The 175-residue stretch at 77 to 251 (TTPKPLVIIT…AAWKIRLVAV (175 aa)) folds into the FAD-binding PCMH-type domain. The segment at residues 114–176 (HDAEGMSYIS…ENLSFPAGYC (63 aa)) is a cross-link (6-(S-cysteinyl)-8alpha-(pros-histidyl)-FAD (His-Cys)). Position 292 (H292) interacts with substrate. Residues N297, N305, N329, and N361 are each glycosylated (N-linked (GlcNAc...) asparagine). Position 417 (Y417) interacts with substrate. N-linked (GlcNAc...) asparagine glycosylation occurs at N467. Y484 acts as the Proton acceptor in catalysis. Residue N499 is glycosylated (N-linked (GlcNAc...) asparagine).

It belongs to the oxygen-dependent FAD-linked oxidoreductase family. It depends on FAD as a cofactor. Post-translationally, the FAD cofactor is bound via a bicovalent 6-S-cysteinyl, 8alpha-N1-histidyl FAD linkage.

The protein localises to the secreted. In terms of biological role, has no cannabidiolic acid synthase activity. The protein is Cannabidiolic acid synthase-like 1 (CBDAS2) of Cannabis sativa (Hemp).